A 78-amino-acid chain; its full sequence is UPF0270 protein YE3952 (78 aa).

The protein belongs to the UPF0270 family.

The polypeptide is UPF0270 protein YE3952 (Yersinia enterocolitica serotype O:8 / biotype 1B (strain NCTC 13174 / 8081)).